A 137-amino-acid chain; its full sequence is Protein LTO1 homolog (137 aa).

The residue at position 2 (Ala-2) is an N-acetylalanine. Ser-4 bears the Phosphoserine mark. Residues 22–58 (GYREGYEEGSSLGVMEGRQHGTLHGAKIGSEIGCYQG) form a deca-GX3 motif; required for interaction with YAE1 and the CIA complex region.

This sequence belongs to the LTO1 family. Forms a complex with YAE1. Interacts with PYCR1 and PYCR2. In terms of tissue distribution, widely expressed. Highly expressed in placenta, kidney and skeletal muscle.

It is found in the nucleus. In terms of biological role, the complex LTO1:YAE1 functions as a target specific adapter that probably recruits apo-ABCE1 to the cytosolic iron-sulfur protein assembly (CIA) complex machinery. May be required for biogenesis of the large ribosomal subunit and initiation of translation. May play a role in the regulation of proline metabolism and ROS production. The sequence is that of Protein LTO1 homolog from Homo sapiens (Human).